The primary structure comprises 142 residues: MAAKKVVKQIKLQVEAGKANPAPPVGPALGQAGLNIMEFCKQFNERSKAQIGLKLPVVITVFSDRSFTFITKSPPAALLVKKAIGLETGSPTPHTHKVGKITRKQLEEIAKTKMEDLNANDIDAAVNIIAGTCRSMGVTVEA.

It belongs to the universal ribosomal protein uL11 family. As to quaternary structure, part of the ribosomal stalk of the 50S ribosomal subunit. Interacts with L10 and the large rRNA to form the base of the stalk. L10 forms an elongated spine to which L12 dimers bind in a sequential fashion forming a multimeric L10(L12)X complex. Post-translationally, one or more lysine residues are methylated.

Its function is as follows. Forms part of the ribosomal stalk which helps the ribosome interact with GTP-bound translation factors. This is Large ribosomal subunit protein uL11 from Leptospira borgpetersenii serovar Hardjo-bovis (strain JB197).